A 570-amino-acid polypeptide reads, in one-letter code: Ferroportin (570 aa).

At 1 to 23 the chain is on the cytoplasmic side; it reads MTKSRDQTHQEGCCGSLANYLTS. The helical transmembrane segment at 24-53 threads the bilayer; that stretch reads AKFLLYLGHSLSTWGDRMWHFAVSVFLVEL. 2 residues coordinate Fe cation: Asp39 and His43. Topologically, residues 54–57 are extracellular; the sequence is YGNS. The helical transmembrane segment at 58 to 84 threads the bilayer; that stretch reads LLLTAVYGLVVAGSVLVLGAIIGDWVD. At 85 to 87 the chain is on the cytoplasmic side; sequence KNA. The chain crosses the membrane as a helical span at residues 88–118; the sequence is RLKVAQTSLVVQNVSVILCGIILMMVFLHKN. Topologically, residues 119 to 126 are extracellular; it reads ELLNMYHG. The helical transmembrane segment at 127–162 threads the bilayer; sequence WVLTVCYILIITIANIANLASTATAITIQRDWIVVV. The Cytoplasmic segment spans residues 163–164; it reads AG. Residues 165 to 195 form a helical membrane-spanning segment; the sequence is ENRSRLADMNATIRRIDQLTNILAPMAVGQI. The Extracellular portion of the chain corresponds to 196-202; the sequence is MTFGSPV. Residues 203-229 form a helical membrane-spanning segment; that stretch reads IGCGFISGWNLVSMCVEYFLLWKVYQK. Topologically, residues 230–306 are cytoplasmic; sequence TPALAVKAAL…DGWVSYYNQP (77 aa). A helical transmembrane segment spans residues 307 to 333; that stretch reads VFLAGMGLAFLYMTVLGFDCITTGYAY. Residue Cys326 participates in Fe cation binding. The Extracellular portion of the chain corresponds to 334 to 338; the sequence is TQGLS. A helical membrane pass occupies residues 339–366; the sequence is GSILSVLMGASAITGIMGTVAFTWLRRK. The Cytoplasmic segment spans residues 367–368; the sequence is CG. The chain crosses the membrane as a helical span at residues 369–391; sequence LVRTGLFSGLAQLSCLILCVISV. At 392–452 the chain is on the extracellular side; that stretch reads FMPGSPLDLS…EMSTKSVPII (61 aa). The chain crosses the membrane as a helical span at residues 453–482; the sequence is SVSLLFAGVIAARIGLWSFDLTVTQLLQEN. At 483 to 487 the chain is on the cytoplasmic side; it reads VIESE. A helical transmembrane segment spans residues 488–512; the sequence is RGIINGVQNSMNYLLDLLHFIMVIL. His506 serves as a coordination point for Fe cation. Over 513 to 515 the chain is Extracellular; the sequence is APN. A helical transmembrane segment spans residues 516-541; that stretch reads PEAFGLLVLISVSFVAMGHLMYFRFA. The Cytoplasmic portion of the chain corresponds to 542-570; sequence QKTLGNQIFVCAPDEKEVTDESQPNTSVV.

This sequence belongs to the ferroportin (FP) (TC 2.A.100) family. SLC40A subfamily. In terms of assembly, identified in a complex with STOM. Interacts with HAMP; affinity of the peptide hormone HAMP for SLC40A1 increases by 80-fold in the presence of iron and the interaction promotes SLC40A1 ubiquitination and degradation. Part of a complex composed of SLC40A1/ferroportin, TF/transferrin and HEPH/hephaestin that transfers iron from cells to transferrin. In terms of processing, polyubiquitinated by RNF217; leading to proteasomal degradation. Under conditions of high systemic iron levels, both the hormone peptide hepcidin/HAMP and holo(iron bound)-transferrin/TF induce the ubiquitination, internalization and proteasomal degradation of SLC40A1 to control iron release from cells.

Its subcellular location is the cell membrane. It is found in the basolateral cell membrane. It carries out the reaction Fe(2+)(in) = Fe(2+)(out). Its activity is regulated as follows. During elevated serum iron levels, liver-derived hepcidin/HAMP negatively regulates cell surface SLC40A1 by inducing its ubiquitination, internalization, and degradation. Indeed, hepcidin/HAMP affinity towards ferroportin/SLC40A1 increases by 80-fold in the presence of iron. Its function is as follows. Transports Fe(2+) from the inside of a cell to the outside of the cell, playing a key role for maintaining systemic iron homeostasis. Transports iron from intestinal, splenic, hepatic cells, macrophages and erythrocytes into the blood to provide iron to other tissues. Controls therefore dietary iron uptake, iron recycling by macrophages and erythrocytes, and release of iron stores in hepatocytes. When iron is in excess in serum, circulating HAMP/hepcidin levels increase resulting in a degradation of SLC40A1, thus limiting the iron efflux to plasma. This chain is Ferroportin, found in Rattus norvegicus (Rat).